We begin with the raw amino-acid sequence, 504 residues long: Putative arrestin-related trafficking adapter SPBC839.02 (504 aa).

A disordered region spans residues 481–504 (QAPPPKYDDIFQSGSSHDENHDDN).

This sequence belongs to the ALY1 family.

Its function is as follows. May regulate endocytosis in response to extracellular stimuli. This is Putative arrestin-related trafficking adapter SPBC839.02 from Schizosaccharomyces pombe (strain 972 / ATCC 24843) (Fission yeast).